The primary structure comprises 510 residues: NAD(P)H-quinone oxidoreductase subunit 2 B, chloroplastic (510 aa).

13 helical membrane passes run 24 to 44 (LLLFDGSLIFPECILIFGLIL), 57 to 77 (LPWFYFISSTSLVMSITALLF), 99 to 119 (IFQFLILLCSTLCIPLSVEYI), 124 to 144 (MAITEFLLFVLTATLGGMFLC), 149 to 169 (LITIFVAPECFSFCSYLLSGY), 183 to 203 (YLLMGGASSSILVHAFSWLYG), 227 to 247 (PGISIALLFITVGIGFKLSPA), 295 to 315 (WHLLLEILAILSMILGNIIAI), 323 to 343 (MLAYSSIGQIGYVIIGIIVGD), 354 to 374 (YMLFYISMNLGTFACIVLFGL), 395 to 415 (ALSLALCLLSLGGLPPLAGFF), 428 to 448 (GLYSLVLIGLLTSVVSIYYYL), and 484 to 504 (MIVCVIASTIPGISMNPIIAI).

Belongs to the complex I subunit 2 family. As to quaternary structure, NDH is composed of at least 16 different subunits, 5 of which are encoded in the nucleus.

The protein localises to the plastid. The protein resides in the chloroplast thylakoid membrane. The enzyme catalyses a plastoquinone + NADH + (n+1) H(+)(in) = a plastoquinol + NAD(+) + n H(+)(out). The catalysed reaction is a plastoquinone + NADPH + (n+1) H(+)(in) = a plastoquinol + NADP(+) + n H(+)(out). In terms of biological role, NDH shuttles electrons from NAD(P)H:plastoquinone, via FMN and iron-sulfur (Fe-S) centers, to quinones in the photosynthetic chain and possibly in a chloroplast respiratory chain. The immediate electron acceptor for the enzyme in this species is believed to be plastoquinone. Couples the redox reaction to proton translocation, and thus conserves the redox energy in a proton gradient. The sequence is that of NAD(P)H-quinone oxidoreductase subunit 2 B, chloroplastic from Jasminum nudiflorum (Winter jasmine).